Reading from the N-terminus, the 370-residue chain is Probable pectin lyase E (370 aa).

C75 and C96 are oxidised to a cystine. Residue R245 is part of the active site. N307 carries an N-linked (GlcNAc...) asparagine glycan. Cysteines 311 and 319 form a disulfide.

This sequence belongs to the polysaccharide lyase 1 family.

Its subcellular location is the secreted. It carries out the reaction Eliminative cleavage of (1-&gt;4)-alpha-D-galacturonan methyl ester to give oligosaccharides with 4-deoxy-6-O-methyl-alpha-D-galact-4-enuronosyl groups at their non-reducing ends.. Its function is as follows. Pectinolytic enzymes consist of four classes of enzymes: pectin lyase, polygalacturonase, pectin methylesterase and rhamnogalacturonase. Among pectinolytic enzymes, pectin lyase is the most important in depolymerization of pectin, since it cleaves internal glycosidic bonds of highly methylated pectins. This is Probable pectin lyase E (pelE) from Aspergillus niger.